Reading from the N-terminus, the 340-residue chain is Deubiquitinase SseL (340 aa).

Residue histidine 223 is part of the active site. Catalysis depends on cysteine 285, which acts as the Nucleophile.

It belongs to the peptidase C79 family.

Its subcellular location is the secreted. It is found in the host cytoplasm. In terms of biological role, effector proteins function to alter host cell physiology and promote bacterial survival in host tissues. This protease targets the host cell ubiquitin pathway by acting as a deubiquitinase in infected host cells. This Salmonella paratyphi B (strain ATCC BAA-1250 / SPB7) protein is Deubiquitinase SseL (sseL).